A 207-amino-acid chain; its full sequence is dTTP/UTP pyrophosphatase (207 aa).

Aspartate 79 (proton acceptor) is an active-site residue.

Belongs to the Maf family. YhdE subfamily. A divalent metal cation is required as a cofactor.

It is found in the cytoplasm. It catalyses the reaction dTTP + H2O = dTMP + diphosphate + H(+). The enzyme catalyses UTP + H2O = UMP + diphosphate + H(+). Nucleoside triphosphate pyrophosphatase that hydrolyzes dTTP and UTP. May have a dual role in cell division arrest and in preventing the incorporation of modified nucleotides into cellular nucleic acids. This is dTTP/UTP pyrophosphatase from Rhodopseudomonas palustris (strain BisB18).